Consider the following 384-residue polypeptide: Carbazole 1,9a-dioxygenase, terminal oxygenase component CarAa (384 aa).

Residues 29–135 (WYPVMFSKEI…VQEAKGCVFI (107 aa)) enclose the Rieske domain. 4 residues coordinate [2Fe-2S] cluster: C69, H71, C90, and H93.

As to quaternary structure, homotrimer. Carbazole 1,9a-dioxygenase complex consists of a terminal oxygenase component CarAa, a ferredoxin reductase component CarAd and a ferredoxin component CarAc. Requires [2Fe-2S] cluster as cofactor.

It catalyses the reaction 9H-carbazole + NADH + O2 + H(+) = 2'-aminobiphenyl-2,3-diol + NAD(+). The catalysed reaction is 9H-carbazole + NADPH + O2 + H(+) = 2'-aminobiphenyl-2,3-diol + NADP(+). Part of the multicomponent carbazole 1,9a-dioxygenase (CARDO), that converts carbazole (CAR) into 2-aminobiphenyl-2,3-diol. Catalyzes the dioxygenation at the angular (C-9a) and adjacent (C-1) positions of carbazole to yield a highly unstable cis-hydrodiol intermediate which is spontaneously converted to 2-aminobiphenyl-2,3-diol. It is also able to attack the angular position adjacent of hetero atom of heterocyclic aromatic compounds such as polychlorinated dibenzo-p-dioxin (DD) and dibenzofuran (DBF). It was also shown that CARDO has the ability to metabolize biphenyl and polycyclic aromatic hydrocarbons, such as naphthalene and phenanthrene. The polypeptide is Carbazole 1,9a-dioxygenase, terminal oxygenase component CarAa (carAa) (Metapseudomonas resinovorans (Pseudomonas resinovorans)).